The chain runs to 512 residues: Paraspeckle component 1 (512 aa).

Polar residues-rich tracts occupy residues 1 to 29 (MANP…STES) and 46 to 55 (DPSSANSEPQ). Residues 1-56 (MANPNLKQVNIQNNATFPHQQNVTRSTESPGDPKETMEAVAPSPQDPSSANSEPQE) form a disordered region. RRM domains follow at residues 76–148 (CRLF…FATH) and 150–231 (AALT…PTEQ). Residues 276-366 (LDEMDKQQRE…MIRHREQLDI (91 aa)) adopt a coiled-coil conformation. The segment at 451–512 (GPLQMGSPVG…DGPNNKRRRY (62 aa)) is disordered. Positions 464-474 (GVDSPQPQQHS) are enriched in polar residues. Gly residues predominate over residues 488 to 502 (GQSGFGRGSPVGGSF).

The protein belongs to the PSPC family.

It is found in the nucleus speckle. In terms of biological role, RNA-binding protein required for the formation of nuclear paraspeckles. Binds to poly(A), poly(G) and poly(U) RNA homopolymers. The chain is Paraspeckle component 1 (pspc1) from Danio rerio (Zebrafish).